Consider the following 171-residue polypeptide: Adenine phosphoribosyltransferase (171 aa).

This sequence belongs to the purine/pyrimidine phosphoribosyltransferase family. Homodimer.

It is found in the cytoplasm. The catalysed reaction is AMP + diphosphate = 5-phospho-alpha-D-ribose 1-diphosphate + adenine. The protein operates within purine metabolism; AMP biosynthesis via salvage pathway; AMP from adenine: step 1/1. In terms of biological role, catalyzes a salvage reaction resulting in the formation of AMP, that is energically less costly than de novo synthesis. This chain is Adenine phosphoribosyltransferase, found in Mesomycoplasma hyopneumoniae (strain 232) (Mycoplasma hyopneumoniae).